The following is a 311-amino-acid chain: Probable manganese-dependent inorganic pyrophosphatase (311 aa).

Mn(2+)-binding residues include H9, D13, D15, D77, H99, and D151.

The protein belongs to the PPase class C family. Mn(2+) is required as a cofactor.

The protein localises to the cytoplasm. It carries out the reaction diphosphate + H2O = 2 phosphate + H(+). This chain is Probable manganese-dependent inorganic pyrophosphatase, found in Streptococcus sanguinis (strain SK36).